Reading from the N-terminus, the 532-residue chain is [Pyruvate dehydrogenase [acetyl-transferring]]-phosphatase 2, mitochondrial (532 aa).

A mitochondrion-targeting transit peptide spans Met-1–Thr-69. The 412-residue stretch at Asn-107–Val-518 folds into the PPM-type phosphatase domain. Mn(2+) contacts are provided by Asp-144, Gly-145, Asp-415, and Asp-511.

This sequence belongs to the PP2C family. Mg(2+) serves as cofactor.

Its subcellular location is the mitochondrion. The catalysed reaction is O-phospho-L-seryl-[pyruvate dehydrogenase E1 alpha subunit] + H2O = L-seryl-[pyruvate dehydrogenase E1 alpha subunit] + phosphate. Functionally, mitochondrial enzyme that catalyzes the dephosphorylation and concomitant reactivation of the alpha subunit of the E1 component of the pyruvate dehydrogenase complex (PDC), thereby stimulating the conversion of pyruvate into acetyl-CoA. Acts as a crucial regulator of T cell metabolism and function, with a particular focus on T-helper Th17. The chain is [Pyruvate dehydrogenase [acetyl-transferring]]-phosphatase 2, mitochondrial (Pdp2) from Mus musculus (Mouse).